The sequence spans 473 residues: uncharacterized protein (473 aa).

Residues 26–254 (PKLYIASSGV…KMSEIFNSFG (229 aa)) enclose the SET domain.

This is an uncharacterized protein from Schizosaccharomyces pombe (strain 972 / ATCC 24843) (Fission yeast).